A 490-amino-acid chain; its full sequence is Cysteine--tRNA ligase (490 aa).

Cysteine 31 is a Zn(2+) binding site. A 'HIGH' region motif is present at residues 33 to 43 (PTVYGDAHLGH). Cysteine 226, histidine 251, and glutamate 255 together coordinate Zn(2+). A 'KMSKS' region motif is present at residues 283 to 287 (KMGKS). Residue lysine 286 participates in ATP binding.

It belongs to the class-I aminoacyl-tRNA synthetase family. As to quaternary structure, monomer. Zn(2+) is required as a cofactor.

It localises to the cytoplasm. It catalyses the reaction tRNA(Cys) + L-cysteine + ATP = L-cysteinyl-tRNA(Cys) + AMP + diphosphate. In Porphyromonas gingivalis (strain ATCC BAA-308 / W83), this protein is Cysteine--tRNA ligase.